A 450-amino-acid polypeptide reads, in one-letter code: Tubulin alpha-3C chain (450 aa).

The short motif at 1-4 is the MREC motif element; sequence MREC. Q11 provides a ligand contact to GTP. K40 bears the N6-acetyllysine mark. 7 residues coordinate GTP: E71, S140, G144, T145, T179, N206, and N228. Residue E71 coordinates Mg(2+). E254 is a catalytic residue. Y282 is subject to 3'-nitrotyrosine. S439 bears the Phosphoserine mark. A 3'-nitrotyrosine modification is found at Y450.

Belongs to the tubulin family. In terms of assembly, dimer of alpha and beta chains. A typical microtubule is a hollow water-filled tube with an outer diameter of 25 nm and an inner diameter of 15 nM. Alpha-beta heterodimers associate head-to-tail to form protofilaments running lengthwise along the microtubule wall with the beta-tubulin subunit facing the microtubule plus end conferring a structural polarity. Microtubules usually have 13 protofilaments but different protofilament numbers can be found in some organisms and specialized cells. The cofactor is Mg(2+). In terms of processing, some glutamate residues at the C-terminus are polyglutamylated, resulting in polyglutamate chains on the gamma-carboxyl group. Polyglutamylation plays a key role in microtubule severing by spastin (SPAST). SPAST preferentially recognizes and acts on microtubules decorated with short polyglutamate tails: severing activity by SPAST increases as the number of glutamates per tubulin rises from one to eight, but decreases beyond this glutamylation threshold. Glutamylation is also involved in cilia motility. Some glutamate residues at the C-terminus are monoglycylated but not polyglycylated due to the absence of functional TTLL10 in human. Monoglycylation is mainly limited to tubulin incorporated into cilia and flagella axonemes, which is required for their stability and maintenance. Flagella glycylation controls sperm motility. Both polyglutamylation and monoglycylation can coexist on the same protein on adjacent residues, and lowering glycylation levels increases polyglutamylation, and reciprocally. Post-translationally, acetylation of alpha chains at Lys-40 is located inside the microtubule lumen. This modification has been correlated with increased microtubule stability, intracellular transport and ciliary assembly. In terms of processing, methylation of alpha chains at Lys-40 is found in mitotic microtubules and is required for normal mitosis and cytokinesis contributing to genomic stability. Nitration of Tyr-450 is irreversible and interferes with normal dynein intracellular distribution. Post-translationally, undergoes a tyrosination/detyrosination cycle, the cyclic removal and re-addition of a C-terminal tyrosine residue by the enzymes tubulin tyrosine carboxypeptidase (MATCAP1/KIAA0895L, VASH1 or VASH2) and tubulin tyrosine ligase (TTL), respectively. In terms of processing, tyrosination promotes microtubule interaction with CAP-Gly domain-containing proteins such as CLIP1, CLIP2 and DCTN1. Tyrosination regulates the initiation of dynein-dynactin motility via interaction with DCTN1, which brings the dynein-dynactin complex into contact with microtubules. In neurons, tyrosinated tubulins mediate the initiation of retrograde vesicle transport. Detyrosination is involved in metaphase plate congression by guiding chromosomes during mitosis: detyrosination promotes interaction with CENPE, promoting pole-proximal transport of chromosomes toward the equator. Detyrosination increases microtubules-dependent mechanotransduction in dystrophic cardiac and skeletal muscle. In cardiomyocytes, detyrosinated microtubules are required to resist to contractile compression during contraction: detyrosination promotes association with desmin (DES) at force-generating sarcomeres, leading to buckled microtubules and mechanical resistance to contraction. As to expression, expressed in testis.

The protein localises to the cytoplasm. The protein resides in the cytoskeleton. The enzyme catalyses GTP + H2O = GDP + phosphate + H(+). Its function is as follows. Tubulin is the major constituent of microtubules, a cylinder consisting of laterally associated linear protofilaments composed of alpha- and beta-tubulin heterodimers. Microtubules grow by the addition of GTP-tubulin dimers to the microtubule end, where a stabilizing cap forms. Below the cap, tubulin dimers are in GDP-bound state, owing to GTPase activity of alpha-tubulin. The polypeptide is Tubulin alpha-3C chain (TUBA3C) (Homo sapiens (Human)).